The primary structure comprises 481 residues: Probable myosin light chain kinase DDB_G0284661 (481 aa).

A Protein kinase domain is found at 13-269 (YNITDIIGEG…VKQSLAHKWI (257 aa)). Residues 19–27 (IGEGTFSTV) and Lys43 contribute to the ATP site. Asp136 (proton acceptor) is an active-site residue. 2 disordered regions span residues 285–315 (PLIT…PSLK) and 345–427 (SNSH…DDDE). Low complexity predominate over residues 379–421 (SNNNINNNNDNNDNNNSNSNNSNNNINNFINNNNNNNNNNSNF).

Belongs to the protein kinase superfamily. CAMK Ser/Thr protein kinase family. CaMK subfamily.

It catalyses the reaction L-seryl-[myosin light chain] + ATP = O-phospho-L-seryl-[myosin light chain] + ADP + H(+). It carries out the reaction L-threonyl-[myosin light chain] + ATP = O-phospho-L-threonyl-[myosin light chain] + ADP + H(+). Does not have a calmodulin-binding domain. May phosphorylate a specific serine in the N-terminus of a myosin light chain. In Dictyostelium discoideum (Social amoeba), this protein is Probable myosin light chain kinase DDB_G0284661.